We begin with the raw amino-acid sequence, 182 residues long: Putative manganese efflux pump MntP (182 aa).

A run of 6 helical transmembrane segments spans residues 6 to 26 (LIPL…VSLG), 37 to 57 (ILYI…IGMV), 71 to 91 (HFAG…SSIL), 101 to 121 (IGIS…SVGL), 131 to 151 (IITI…GLFI), and 162 to 182 (YGEI…LFPI).

Belongs to the MntP (TC 9.B.29) family.

It localises to the cell membrane. Its function is as follows. Probably functions as a manganese efflux pump. This Bacillus cereus (strain ATCC 10987 / NRS 248) protein is Putative manganese efflux pump MntP.